We begin with the raw amino-acid sequence, 336 residues long: Transcription factor MYB29 (336 aa).

2 HTH myb-type domains span residues 9–65 (GEGL…KPDI) and 66–116 (KRGE…KKLL). 2 DNA-binding regions (H-T-H motif) span residues 37–61 (WRDI…ANYL) and 89–112 (WSVI…NTHL). Positions 127-170 (KPLAYDSNPDEQSQSGSISPKSLPPSSSKNVPEITSSDETPKYD) are disordered. Residues 141-154 (SGSISPKSLPPSSS) show a composition bias toward low complexity. Over residues 155-164 (KNVPEITSSD) the composition is skewed to polar residues.

Can form complexes with MYC2, MYC3 or MYC4. Expressed in both vegetative and generative organs. Mostly present in seedlings, inflorescences, roots and stems, and, to a lower extent, in leaves (in midvein and trichomes) and siliques.

Its subcellular location is the nucleus. Plays a minor rheostat role in aliphatic glucosinolates (GLSs) biosynthesis, mostly short chained. Together with MYB28/HAG1 and MYB76/HAG2, promotes aliphatic glucosinolate biosynthesis but represses indolic glucosinolate biosynthesis. Prevents insect performance (e.g. lepidopteran insect Mamestra brassicae) by promoting glucosinolates. This chain is Transcription factor MYB29 (MYB29), found in Arabidopsis thaliana (Mouse-ear cress).